Here is an 86-residue protein sequence, read N- to C-terminus: UPF0457 protein SSP0714 (86 aa).

The protein belongs to the UPF0457 family.

The chain is UPF0457 protein SSP0714 from Staphylococcus saprophyticus subsp. saprophyticus (strain ATCC 15305 / DSM 20229 / NCIMB 8711 / NCTC 7292 / S-41).